The chain runs to 113 residues: Small ribosomal subunit protein bS6 (113 aa).

Belongs to the bacterial ribosomal protein bS6 family.

Binds together with bS18 to 16S ribosomal RNA. The polypeptide is Small ribosomal subunit protein bS6 (Flavobacterium psychrophilum (strain ATCC 49511 / DSM 21280 / CIP 103535 / JIP02/86)).